The chain runs to 174 residues: Peptide deformylase (174 aa).

Fe cation is bound by residues cysteine 96 and histidine 138. The active site involves glutamate 139. Histidine 142 contacts Fe cation.

It belongs to the polypeptide deformylase family. Fe(2+) serves as cofactor.

It catalyses the reaction N-terminal N-formyl-L-methionyl-[peptide] + H2O = N-terminal L-methionyl-[peptide] + formate. Its function is as follows. Removes the formyl group from the N-terminal Met of newly synthesized proteins. Requires at least a dipeptide for an efficient rate of reaction. N-terminal L-methionine is a prerequisite for activity but the enzyme has broad specificity at other positions. The chain is Peptide deformylase from Helicobacter pylori (strain J99 / ATCC 700824) (Campylobacter pylori J99).